A 176-amino-acid polypeptide reads, in one-letter code: MASGDVEYRCFVGGLAWATDDRALETAFAQYGDVIDSKIINDRETGRSRGFGFVTFKDEKAMKDAIEGMNGQDLDGRSITVNEAQSRGSGGGGGHRGGGGGGYRSGGGGGYSGGGGSYGGGGGRREGGGGYSGGGGGYSSRGGGGGSYGGGRREGGGGYGGGEGGGYGGSGGGGGW.

Alanine 2 carries the post-translational modification N-acetylalanine. Residues 2 to 41 form a required for RNA chaperone activity region; the sequence is ASGDVEYRCFVGGLAWATDDRALETAFAQYGDVIDSKIIN. One can recognise an RRM domain in the interval 8-86; that stretch reads YRCFVGGLAW…RSITVNEAQS (79 aa). Arginine 49 bears the ADP-ribosylarginine; by HopU1 mark. A disordered region spans residues 83–103; the sequence is EAQSRGSGGGGGHRGGGGGGY. Positions 88-103 are enriched in gly residues; it reads GSGGGGGHRGGGGGGY. A glycine-rich (GR) required for cell-to-cell movement region spans residues 88–175; it reads GSGGGGGHRG…GYGGSGGGGG (88 aa). Residues 97–148 are nuclear targeting sequence (M9); sequence GGGGGGYRSGGGGGYSGGGGSYGGGGGRREGGGGYSGGGGGYSSRGGGGGSY. Serine 105 and serine 117 each carry phosphoserine. The disordered stretch occupies residues 131-176; sequence YSGGGGGYSSRGGGGGSYGGGRREGGGGYGGGEGGGYGGSGGGGGW.

This sequence belongs to the GR-RBP family. Interacts with TRN1. Interacts with the Pseudomonas syringae type III effector HopU1. Binds to small phloem-mobile single-stranded RNAs (ss-sRNA, e.g. small interfering RNA (siRNA) and microRNA (miRNA)) in the phloeme exudate, including viral-derived sRNA (vsiRNA). In terms of processing, ADP-ribosylated by the Pseudomonas syringae type III effector HopU1. ADP-ribosylation reduces the ability of the protein to bind RNA. As to expression, ubiquitous with strong expression in guard cell.

It localises to the cytoplasm. The protein resides in the nucleus. The protein localises to the secreted. Its function is as follows. Plays a role in RNA transcription or processing during stress. Binds RNAs and DNAs sequence with a preference to single-stranded nucleic acids. Displays strong affinity to poly(U) and poly(G) sequence. Involved in mRNA alternative splicing of numerous targets by modulating splice site selection. Negatively regulates the circadian oscillations of its own transcript as well as RBG8 transcript. Forms an interlocked post-transcriptional negative feedback loop with the RBG8 autoregulatory circuit. Both proteins negatively autoregulate and reciprocally crossregulate by binding to their pre-mRNAs and promoting unproductive splicing coupled to degradation via the NMD pathway. Involved in the regulation of abscisic acid and stress responses. Affects the growth and stress tolerance under high salt and dehydration stress conditions, and also confers freezing tolerance, particularly via the regulation of stomatal opening and closing in the guard cells. Exhibits RNA chaperone activity during the cold adaptation process. Involved in the export of mRNAs from the nucleus to the cytoplasm under cold stress conditions. Target of the Pseudomonas syringae type III effector HopU1, which could probably be involved in plant innate immunity. Component of the flowering autonomous pathway which promotes floral transition, at least partly by down-regulating FLC. Mediates cell-to-cell trafficking of RNA interference (RNAi) signals (small RNAs (sRNA), e.g. small interfering RNA (siRNA) and microRNA (miRNA)) which regulate growth and development, as well as responses to environmental inputs, including pathogen attack; can compromise zucchini yellow mosaic virus (ZYMV) and tobacco rattle virus (TRV) infections at the early stage. In Arabidopsis thaliana (Mouse-ear cress), this protein is Glycine-rich RNA-binding protein 7.